Reading from the N-terminus, the 149-residue chain is Calmodulin (149 aa).

EF-hand domains lie at 8-43 (EQIAEFKEAFSLFDKDGDGNITTKELGTVMRSLGQN), 44-79 (PTEAELQDMINEVDADGNGTIDFPEFLTMMARKMAD), 81-116 (DTEEEIREAFKVFDKDGNGFISAAELRHVMTNLGEK), and 117-149 (LSDEEVDEMIREADVDGDGQVNYDEFVKMMLSK). Residues Asp21, Asp23, Asp25, Asn27, Glu32, Asp57, Asp59, Asn61, Thr63, Glu68, Asp94, Asp96, Asn98, and Glu105 each coordinate Ca(2+). Lys116 carries the N6,N6,N6-trimethyllysine modification. Residues Asp130, Asp132, Asp134, Gln136, and Glu141 each contribute to the Ca(2+) site.

Belongs to the calmodulin family.

In terms of biological role, calmodulin mediates the control of a large number of enzymes, ion channels and other proteins by Ca(2+). Among the enzymes to be stimulated by the calmodulin-Ca(2+) complex are a number of protein kinases and phosphatases. This chain is Calmodulin, found in Physarum polycephalum (Slime mold).